A 255-amino-acid polypeptide reads, in one-letter code: Accessory gland-specific peptide 26Aa (255 aa).

An N-terminal signal peptide occupies residues 1 to 18; it reads MNQILLCSQILLLLFAVA. The tract at residues 86–110 is disordered; the sequence is PINNSKSRKNSSTLPSQILTDKPNQ. Residues 87–110 are compositionally biased toward polar residues; that stretch reads INNSKSRKNSSTLPSQILTDKPNQ. Asn-88, Asn-95, and Asn-136 each carry an N-linked (GlcNAc...) asparagine glycan. Disordered regions lie at residues 177 to 197 and 235 to 255; these read NAQN…KDIA and NNPA…PSTT. The segment covering 183–192 has biased composition (basic residues); sequence KPTKSCKKRP. The segment covering 245–255 has biased composition (polar residues); it reads KSPSEGNPSTT.

In terms of processing, it undergoes several cleavages as it is secreted and it is further processed in the recipient female. Main cells of the accessory glands of males.

It localises to the secreted. The protein resides in the extracellular space. In terms of biological role, this protein is transferred from male to female's hemolymph during mating, affecting egglaying and behavior after mating. This Drosophila simulans (Fruit fly) protein is Accessory gland-specific peptide 26Aa (Acp26Aa).